We begin with the raw amino-acid sequence, 510 residues long: Glycerol kinase (510 aa).

Thr-13 serves as a coordination point for ADP. ATP contacts are provided by Thr-13 and Thr-14. Thr-13 lines the sn-glycerol 3-phosphate pocket. Arg-17 contacts ADP. Sn-glycerol 3-phosphate-binding residues include Arg-83, Glu-84, Tyr-135, and Asp-255. Residues Arg-83, Glu-84, Tyr-135, Asp-255, and Gln-256 each coordinate glycerol. Residues Thr-277, Gly-321, Gly-421, and Asn-425 each coordinate ADP. ATP is bound by residues Thr-277, Gly-321, and Gly-421.

The protein belongs to the FGGY kinase family.

It carries out the reaction glycerol + ATP = sn-glycerol 3-phosphate + ADP + H(+). It participates in polyol metabolism; glycerol degradation via glycerol kinase pathway; sn-glycerol 3-phosphate from glycerol: step 1/1. Its function is as follows. Key enzyme in the regulation of glycerol uptake and metabolism. Catalyzes the phosphorylation of glycerol to yield sn-glycerol 3-phosphate. In Halobacterium salinarum (strain ATCC 29341 / DSM 671 / R1), this protein is Glycerol kinase.